A 177-amino-acid polypeptide reads, in one-letter code: uncharacterized protein (177 aa).

The protein belongs to the flavoredoxin family. The cofactor is FMN.

This is an uncharacterized protein from Archaeoglobus fulgidus (strain ATCC 49558 / DSM 4304 / JCM 9628 / NBRC 100126 / VC-16).